Here is a 120-residue protein sequence, read N- to C-terminus: Large ribosomal subunit protein uL18 (120 aa).

The protein belongs to the universal ribosomal protein uL18 family. In terms of assembly, part of the 50S ribosomal subunit; part of the 5S rRNA/L5/L18/L25 subcomplex. Contacts the 5S and 23S rRNAs.

This is one of the proteins that bind and probably mediate the attachment of the 5S RNA into the large ribosomal subunit, where it forms part of the central protuberance. The polypeptide is Large ribosomal subunit protein uL18 (Rhizobium etli (strain ATCC 51251 / DSM 11541 / JCM 21823 / NBRC 15573 / CFN 42)).